The primary structure comprises 226 residues: Ribonuclease 3 (226 aa).

The 123-residue stretch at 6–128 folds into the RNase III domain; the sequence is INRLQRKLGY…LIGGVFLDSD (123 aa). Glu41 serves as a coordination point for Mg(2+). Residue Asp45 is part of the active site. Residues Asp114 and Glu117 each coordinate Mg(2+). The active site involves Glu117. Positions 155–225 constitute a DRBM domain; it reads DPKTRLQEYL…AEQALKMLEL (71 aa).

The protein belongs to the ribonuclease III family. In terms of assembly, homodimer. Requires Mg(2+) as cofactor.

It localises to the cytoplasm. It catalyses the reaction Endonucleolytic cleavage to 5'-phosphomonoester.. Functionally, digests double-stranded RNA. Involved in the processing of primary rRNA transcript to yield the immediate precursors to the large and small rRNAs (23S and 16S). Processes some mRNAs, and tRNAs when they are encoded in the rRNA operon. Processes pre-crRNA and tracrRNA of type II CRISPR loci if present in the organism. The protein is Ribonuclease 3 of Enterobacter sp. (strain 638).